Consider the following 412-residue polypeptide: Proteasome-activating nucleotidase (412 aa).

The stretch at E15–S72 forms a coiled coil. Residues G197–L202 and H336 contribute to the ATP site. The docks into pockets in the proteasome alpha-ring to cause gate opening stretch occupies residues M410 to A412.

It belongs to the AAA ATPase family. In terms of assembly, homohexamer. The hexameric complex has a two-ring architecture resembling a top hat that caps the 20S proteasome core at one or both ends. Upon ATP-binding, the C-terminus of PAN interacts with the alpha-rings of the proteasome core by binding to the intersubunit pockets.

It is found in the cytoplasm. In terms of biological role, ATPase which is responsible for recognizing, binding, unfolding and translocation of substrate proteins into the archaeal 20S proteasome core particle. Is essential for opening the gate of the 20S proteasome via an interaction with its C-terminus, thereby allowing substrate entry and access to the site of proteolysis. Thus, the C-termini of the proteasomal ATPase function like a 'key in a lock' to induce gate opening and therefore regulate proteolysis. Unfolding activity requires energy from ATP hydrolysis, whereas ATP binding alone promotes ATPase-20S proteasome association which triggers gate opening, and supports translocation of unfolded substrates. This is Proteasome-activating nucleotidase from Methanosphaerula palustris (strain ATCC BAA-1556 / DSM 19958 / E1-9c).